A 396-amino-acid polypeptide reads, in one-letter code: Phosphoglycerate kinase (396 aa).

Residues 22–24, Arg-37, 60–63, Arg-118, and Arg-151 contribute to the substrate site; these read DFN and HFGR. Residues Lys-201, Glu-322, and 352–355 contribute to the ATP site; that span reads GGDS.

Belongs to the phosphoglycerate kinase family. As to quaternary structure, monomer.

It localises to the cytoplasm. The enzyme catalyses (2R)-3-phosphoglycerate + ATP = (2R)-3-phospho-glyceroyl phosphate + ADP. Its pathway is carbohydrate degradation; glycolysis; pyruvate from D-glyceraldehyde 3-phosphate: step 2/5. The sequence is that of Phosphoglycerate kinase from Wolbachia pipientis subsp. Culex pipiens (strain wPip).